Consider the following 1019-residue polypeptide: Insulin-degrading enzyme (1019 aa).

A Zn(2+)-binding site is contributed by His-108. Catalysis depends on Glu-111, which acts as the Proton acceptor. Zn(2+)-binding residues include His-112 and Glu-189. Lys-192 carries the N6-succinyllysine modification. 359 to 363 (LVGGQ) provides a ligand contact to substrate. Position 429 (Arg-429) interacts with ATP. Lys-697 carries the post-translational modification N6-succinyllysine. The SlyX motif motif lies at 853-858 (EKPPHY). 895–901 (DKPKKLS) is an ATP binding site.

It belongs to the peptidase M16 family. In terms of assembly, homodimer. Can also form homotetramers. Zn(2+) is required as a cofactor. Detected in brain and liver (at protein level). Detected in liver.

The protein localises to the cytoplasm. It localises to the cytosol. It is found in the cell membrane. Its subcellular location is the secreted. The catalysed reaction is Degradation of insulin, glucagon and other polypeptides. No action on proteins.. Activated by ATP, other nucleotide triphosphates and small peptides. Inhibited by bacitracin. Plays a role in the cellular breakdown of insulin, APP peptides, IAPP peptides, natriuretic peptides, glucagon, bradykinin, kallidin, and other peptides, and thereby plays a role in intercellular peptide signaling. Substrate binding induces important conformation changes, making it possible to bind and degrade larger substrates, such as insulin. Contributes to the regulation of peptide hormone signaling cascades and regulation of blood glucose homeostasis via its role in the degradation of insulin, glucagon and IAPP. Plays a role in the degradation and clearance of APP-derived amyloidogenic peptides that are secreted by neurons and microglia. Degrades the natriuretic peptides ANP, BNP and CNP, inactivating their ability to raise intracellular cGMP. Also degrades an aberrant frameshifted 40-residue form of NPPA (fsNPPA) which is associated with familial atrial fibrillation in heterozygous patients. Involved in antigen processing. Produces both the N terminus and the C terminus of MAGEA3-derived antigenic peptide (EVDPIGHLY) that is presented to cytotoxic T lymphocytes by MHC class I. The sequence is that of Insulin-degrading enzyme (Ide) from Mus musculus (Mouse).